The following is a 439-amino-acid chain: Trigger factor (439 aa).

The region spanning 175 to 260 (SDKLVIDYQN…VKSVYVMKGM (86 aa)) is the PPIase FKBP-type domain.

The protein belongs to the FKBP-type PPIase family. Tig subfamily.

The protein resides in the cytoplasm. The enzyme catalyses [protein]-peptidylproline (omega=180) = [protein]-peptidylproline (omega=0). Involved in protein export. Acts as a chaperone by maintaining the newly synthesized protein in an open conformation. Functions as a peptidyl-prolyl cis-trans isomerase. The chain is Trigger factor from Ehrlichia chaffeensis (strain ATCC CRL-10679 / Arkansas).